The following is a 616-amino-acid chain: Leucine aminopeptidase (616 aa).

Substrate-binding positions include 128-130 (QCQ) and 282-286 (GGMEN). His309 provides a ligand contact to Zn(2+). Glu310 acts as the Proton acceptor in catalysis. Zn(2+) contacts are provided by His313 and Glu332. The active-site Proton donor is the Tyr397. Residue 566–568 (RMK) participates in substrate binding.

Belongs to the peptidase M1 family. It depends on Zn(2+) as a cofactor.

The protein localises to the cytoplasm. It catalyses the reaction an epoxide + H2O = an ethanediol. Functionally, aminopeptidase that preferentially cleaves di- and tripeptides. Also has low epoxide hydrolase activity (in vitro). Can hydrolyze the epoxide leukotriene LTA(4) but it forms preferentially 5,6-dihydroxy-7,9,11,14-eicosatetraenoic acid rather than the cytokine leukotriene B(4) as the product compared to the homologous mammalian enzyme (in vitro). This is Leucine aminopeptidase (LKHA4) from Arabidopsis thaliana (Mouse-ear cress).